We begin with the raw amino-acid sequence, 200 residues long: Transcription factor FapR (200 aa).

This sequence belongs to the FapR family.

In terms of biological role, transcriptional factor involved in regulation of membrane lipid biosynthesis by repressing genes involved in fatty acid and phospholipid metabolism. In Caldanaerobacter subterraneus subsp. tengcongensis (strain DSM 15242 / JCM 11007 / NBRC 100824 / MB4) (Thermoanaerobacter tengcongensis), this protein is Transcription factor FapR.